The chain runs to 303 residues: Protoheme IX farnesyltransferase (303 aa).

The next 7 membrane-spanning stretches (helical) occupy residues 25-45 (MGLVQGNLIPAFAGSWLAIVL), 54-74 (IPQILMMLVGSTLIMGGACAL), 118-138 (LLFALNIPSGVIGLLGIVGYV), 151-171 (WNTVIGSFPGAVPPLIGWTAI), 177-197 (LVAVALFLVIFCWQPIHFYAL), 230-250 (LVVLLPLPFLLSSLGVTFIVL), and 280-300 (FIYSLNYLVVFFVLVVVISLI).

The protein belongs to the UbiA prenyltransferase family. Protoheme IX farnesyltransferase subfamily. Interacts with CtaA.

Its subcellular location is the cell membrane. The catalysed reaction is heme b + (2E,6E)-farnesyl diphosphate + H2O = Fe(II)-heme o + diphosphate. It functions in the pathway porphyrin-containing compound metabolism; heme O biosynthesis; heme O from protoheme: step 1/1. Functionally, converts heme B (protoheme IX) to heme O by substitution of the vinyl group on carbon 2 of heme B porphyrin ring with a hydroxyethyl farnesyl side group. This Staphylococcus saprophyticus subsp. saprophyticus (strain ATCC 15305 / DSM 20229 / NCIMB 8711 / NCTC 7292 / S-41) protein is Protoheme IX farnesyltransferase.